Here is a 410-residue protein sequence, read N- to C-terminus: 2-oxoisovalerate dehydrogenase subunit alpha (410 aa).

The protein belongs to the BCKDHA family. Heterodimer of an alpha and a beta chain. It depends on thiamine diphosphate as a cofactor.

It catalyses the reaction N(6)-[(R)-lipoyl]-L-lysyl-[protein] + 3-methyl-2-oxobutanoate + H(+) = N(6)-[(R)-S(8)-2-methylpropanoyldihydrolipoyl]-L-lysyl-[protein] + CO2. Its function is as follows. The branched-chain alpha-keto dehydrogenase complex catalyzes the overall conversion of alpha-keto acids to acyl-CoA and CO(2). It contains multiple copies of three enzymatic components: branched-chain alpha-keto acid decarboxylase (E1), lipoamide acyltransferase (E2) and lipoamide dehydrogenase (E3). This is 2-oxoisovalerate dehydrogenase subunit alpha (bkdA1) from Pseudomonas aeruginosa (strain ATCC 15692 / DSM 22644 / CIP 104116 / JCM 14847 / LMG 12228 / 1C / PRS 101 / PAO1).